Here is a 77-residue protein sequence, read N- to C-terminus: Acyl carrier protein (77 aa).

The Carrier domain maps to 2-77 (SDVADRVKKI…DAVKFISEAS (76 aa)). The residue at position 37 (Ser37) is an O-(pantetheine 4'-phosphoryl)serine.

It belongs to the acyl carrier protein (ACP) family. 4'-phosphopantetheine is transferred from CoA to a specific serine of apo-ACP by AcpS. This modification is essential for activity because fatty acids are bound in thioester linkage to the sulfhydryl of the prosthetic group.

The protein localises to the cytoplasm. It participates in lipid metabolism; fatty acid biosynthesis. Its function is as follows. Carrier of the growing fatty acid chain in fatty acid biosynthesis. This chain is Acyl carrier protein, found in Ruegeria pomeroyi (strain ATCC 700808 / DSM 15171 / DSS-3) (Silicibacter pomeroyi).